The following is a 255-amino-acid chain: tRNA1(Val) (adenine(37)-N6)-methyltransferase (255 aa).

Belongs to the methyltransferase superfamily. tRNA (adenine-N(6)-)-methyltransferase family.

Its subcellular location is the cytoplasm. It catalyses the reaction adenosine(37) in tRNA1(Val) + S-adenosyl-L-methionine = N(6)-methyladenosine(37) in tRNA1(Val) + S-adenosyl-L-homocysteine + H(+). Specifically methylates the adenine in position 37 of tRNA(1)(Val) (anticodon cmo5UAC). This chain is tRNA1(Val) (adenine(37)-N6)-methyltransferase, found in Porphyromonas gingivalis (strain ATCC 33277 / DSM 20709 / CIP 103683 / JCM 12257 / NCTC 11834 / 2561).